The sequence spans 85 residues: Cysteine-rich venom protein 1 (85 aa).

A signal peptide spans Met-1–Ala-21. Cystine bridges form between Cys-29–Cys-63, Cys-38–Cys-59, Cys-42–Cys-53, Cys-46–Cys-84, and Cys-65–Cys-78. Positions Cys-29 to Cys-84 constitute a TIL domain.

It belongs to the serine protease inhibitor-like (TIL domain-containing) family. As to expression, expressed by the venom gland.

The protein localises to the secreted. Its function is as follows. May be a phenoloxidase inhibitor that stabilizes or inhibits venom phenoloxidase while it is stored in the venom sac. The protein is Cysteine-rich venom protein 1 of Pimpla hypochondriaca (Parasitoid wasp).